The sequence spans 575 residues: Sulfite reductase [NADPH] hemoprotein beta-component (575 aa).

Cys438, Cys444, Cys484, and Cys488 together coordinate [4Fe-4S] cluster. Cys488 serves as a coordination point for siroheme.

Belongs to the nitrite and sulfite reductase 4Fe-4S domain family. In terms of assembly, alpha(8)-beta(8). The alpha component is a flavoprotein, the beta component is a hemoprotein. The cofactor is siroheme. [4Fe-4S] cluster is required as a cofactor.

It carries out the reaction hydrogen sulfide + 3 NADP(+) + 3 H2O = sulfite + 3 NADPH + 4 H(+). Its pathway is sulfur metabolism; hydrogen sulfide biosynthesis; hydrogen sulfide from sulfite (NADPH route): step 1/1. In terms of biological role, component of the sulfite reductase complex that catalyzes the 6-electron reduction of sulfite to sulfide. This is one of several activities required for the biosynthesis of L-cysteine from sulfate. This Vibrio atlanticus (strain LGP32) (Vibrio splendidus (strain Mel32)) protein is Sulfite reductase [NADPH] hemoprotein beta-component.